Consider the following 278-residue polypeptide: 4-hydroxy-3-methylbut-2-enyl diphosphate reductase (278 aa).

Residue Cys12 participates in [4Fe-4S] cluster binding. Positions 36 and 70 each coordinate (2E)-4-hydroxy-3-methylbut-2-enyl diphosphate. Dimethylallyl diphosphate is bound by residues His36 and His70. Isopentenyl diphosphate-binding residues include His36 and His70. Cys92 provides a ligand contact to [4Fe-4S] cluster. His120 lines the (2E)-4-hydroxy-3-methylbut-2-enyl diphosphate pocket. His120 serves as a coordination point for dimethylallyl diphosphate. Residue His120 coordinates isopentenyl diphosphate. The Proton donor role is filled by Glu122. Residue Thr158 coordinates (2E)-4-hydroxy-3-methylbut-2-enyl diphosphate. Residue Cys186 coordinates [4Fe-4S] cluster. (2E)-4-hydroxy-3-methylbut-2-enyl diphosphate contacts are provided by Ser214, Asn216, and Ser258. Residues Ser214, Asn216, and Ser258 each coordinate dimethylallyl diphosphate. Positions 214, 216, and 258 each coordinate isopentenyl diphosphate.

It belongs to the IspH family. Requires [4Fe-4S] cluster as cofactor.

It carries out the reaction isopentenyl diphosphate + 2 oxidized [2Fe-2S]-[ferredoxin] + H2O = (2E)-4-hydroxy-3-methylbut-2-enyl diphosphate + 2 reduced [2Fe-2S]-[ferredoxin] + 2 H(+). It catalyses the reaction dimethylallyl diphosphate + 2 oxidized [2Fe-2S]-[ferredoxin] + H2O = (2E)-4-hydroxy-3-methylbut-2-enyl diphosphate + 2 reduced [2Fe-2S]-[ferredoxin] + 2 H(+). It functions in the pathway isoprenoid biosynthesis; dimethylallyl diphosphate biosynthesis; dimethylallyl diphosphate from (2E)-4-hydroxy-3-methylbutenyl diphosphate: step 1/1. Its pathway is isoprenoid biosynthesis; isopentenyl diphosphate biosynthesis via DXP pathway; isopentenyl diphosphate from 1-deoxy-D-xylulose 5-phosphate: step 6/6. In terms of biological role, catalyzes the conversion of 1-hydroxy-2-methyl-2-(E)-butenyl 4-diphosphate (HMBPP) into a mixture of isopentenyl diphosphate (IPP) and dimethylallyl diphosphate (DMAPP). Acts in the terminal step of the DOXP/MEP pathway for isoprenoid precursor biosynthesis. This is 4-hydroxy-3-methylbut-2-enyl diphosphate reductase from Campylobacter lari (strain RM2100 / D67 / ATCC BAA-1060).